We begin with the raw amino-acid sequence, 1442 residues long: Clustered mitochondria protein homolog (1442 aa).

2 disordered regions span residues 38 to 100 and 237 to 258; these read NYRN…KKPD and GRSE…KDRP. Residues 82-100 show a composition bias toward basic and acidic residues; it reads SEGEQQKDKTAAEDKKKPD. Residues 394–636 enclose the Clu domain; it reads RAEDTFSSKL…RTFPPDVNFL (243 aa). Composition is skewed to basic and acidic residues over residues 696–714 and 737–763; these read QKQE…EPKA and ESKE…KVET. Disordered regions lie at residues 696–763 and 949–984; these read QKQE…KVET and SESD…SFQC. Residues 949–958 are compositionally biased toward polar residues; sequence SESDALTKSG. 3 TPR repeats span residues 1087 to 1120, 1213 to 1246, and 1248 to 1281; these read AYNF…LNNV, ALLD…NIKY, and GEKS…EKET. The interval 1373–1442 is disordered; that stretch reads RQKEGGTSEQ…SSNASAQQVS (70 aa). Positions 1380-1390 are enriched in low complexity; it reads SEQAAAAQASQ. The span at 1424-1442 shows a compositional bias: polar residues; the sequence is ASSSKQADNSSNASAQQVS.

The protein belongs to the CLU family.

The protein localises to the cytoplasm. MRNA-binding protein involved in proper cytoplasmic distribution of mitochondria. In Aedes aegypti (Yellowfever mosquito), this protein is Clustered mitochondria protein homolog.